The following is a 742-amino-acid chain: Zinc finger protein 280C (742 aa).

Residues K10, K23, K42, K65, K85, K123, and K135 each participate in a glycyl lysine isopeptide (Lys-Gly) (interchain with G-Cter in SUMO2) cross-link. Residues F138–Q168 show a composition bias toward polar residues. The interval F138–R243 is disordered. Glycyl lysine isopeptide (Lys-Gly) (interchain with G-Cter in SUMO2) cross-links involve residues K180, K186, and K193. A compositionally biased stretch (polar residues) spans P182–N191. The span at S200–Q222 shows a compositional bias: low complexity. Polar residues predominate over residues T223 to R243. C2H2-type zinc fingers lie at residues F323 to H345, T360 to H383, T390 to H413, Y420 to H443, and Y477 to H499. Over residues L523–T578 the composition is skewed to low complexity. The tract at residues L523–K608 is disordered. A compositionally biased stretch (polar residues) spans G579–K592. K580 is covalently cross-linked (Glycyl lysine isopeptide (Lys-Gly) (interchain with G-Cter in SUMO2)). The span at S593 to K608 shows a compositional bias: basic residues.

The protein resides in the nucleus. May function as a transcription factor. The sequence is that of Zinc finger protein 280C (Znf280c) from Mus musculus (Mouse).